We begin with the raw amino-acid sequence, 158 residues long: 2-C-methyl-D-erythritol 2,4-cyclodiphosphate synthase (158 aa).

A divalent metal cation is bound by residues Asp9 and His11. 4-CDP-2-C-methyl-D-erythritol 2-phosphate is bound by residues 9-11 (DVH) and 35-36 (HS). His43 contributes to the a divalent metal cation binding site. 4-CDP-2-C-methyl-D-erythritol 2-phosphate is bound by residues 57–59 (DIG) and Arg143.

The protein belongs to the IspF family. In terms of assembly, homotrimer. The cofactor is a divalent metal cation.

It carries out the reaction 4-CDP-2-C-methyl-D-erythritol 2-phosphate = 2-C-methyl-D-erythritol 2,4-cyclic diphosphate + CMP. It participates in isoprenoid biosynthesis; isopentenyl diphosphate biosynthesis via DXP pathway; isopentenyl diphosphate from 1-deoxy-D-xylulose 5-phosphate: step 4/6. Functionally, involved in the biosynthesis of isopentenyl diphosphate (IPP) and dimethylallyl diphosphate (DMAPP), two major building blocks of isoprenoid compounds. Catalyzes the conversion of 4-diphosphocytidyl-2-C-methyl-D-erythritol 2-phosphate (CDP-ME2P) to 2-C-methyl-D-erythritol 2,4-cyclodiphosphate (ME-CPP) with a corresponding release of cytidine 5-monophosphate (CMP). In Chromobacterium violaceum (strain ATCC 12472 / DSM 30191 / JCM 1249 / CCUG 213 / NBRC 12614 / NCIMB 9131 / NCTC 9757 / MK), this protein is 2-C-methyl-D-erythritol 2,4-cyclodiphosphate synthase.